We begin with the raw amino-acid sequence, 161 residues long: Multiprotein-bridging factor 1 (161 aa).

Residues 1-66 (MADDWDTVTK…RSEAGSGQFL (66 aa)) are disordered. Gly residues predominate over residues 14 to 23 (RVGGGGGGGP). Polar residues-rich tracts occupy residues 27–36 (TIKNKSQLNA) and 52–65 (TANS…SGQF). The 55-residue stretch at 90 to 144 (MQNREQKKLGNRLEFGKKVGINEKDLARIEKGEVPITQDQVNRIERGLEMFIRGV) folds into the HTH cro/C1-type domain. A DNA-binding region (H-T-H motif) is located at residues 101–120 (RLEFGKKVGINEKDLARIEK).

It belongs to the MBF1 family.

Transcriptional coactivator that stimulates GCN4-dependent transcriptional activity by bridging the DNA-binding region of GCN4 and TBP (SPT15), thereby recruiting TBP to GCN4-bound promoters. Involved in induction of the ribosome quality control (RQC) pathway; a pathway that degrades nascent peptide chains during problematic translation. Required to prevent stalled ribosomes from frameshifting. The protein is Multiprotein-bridging factor 1 (MBF1) of Pyricularia oryzae (strain 70-15 / ATCC MYA-4617 / FGSC 8958) (Rice blast fungus).